The sequence spans 475 residues: Lactate utilization protein B (475 aa).

4Fe-4S ferredoxin-type domains lie at 304 to 334 (GTEFQAALHCIRCAACINVCPVYRHVGGHSY) and 353 to 382 (YEDHKELPYASSLCAACTDACPVKIPLHEL). The [4Fe-4S] cluster site is built by cysteine 313, cysteine 316, cysteine 319, cysteine 323, cysteine 366, cysteine 369, and cysteine 373.

It belongs to the LutB/YkgF family.

Its function is as follows. Is involved in L-lactate degradation and allows cells to grow with lactate as the sole carbon source. Has probably a role as an electron transporter during oxidation of L-lactate. The sequence is that of Lactate utilization protein B from Shouchella clausii (strain KSM-K16) (Alkalihalobacillus clausii).